A 191-amino-acid chain; its full sequence is Peptidyl-tRNA hydrolase (191 aa).

Residue Tyr14 participates in tRNA binding. The active-site Proton acceptor is His19. TRNA contacts are provided by Phe64, Asn66, and Asn113.

It belongs to the PTH family. Monomer.

The protein localises to the cytoplasm. The catalysed reaction is an N-acyl-L-alpha-aminoacyl-tRNA + H2O = an N-acyl-L-amino acid + a tRNA + H(+). Functionally, hydrolyzes ribosome-free peptidyl-tRNAs (with 1 or more amino acids incorporated), which drop off the ribosome during protein synthesis, or as a result of ribosome stalling. Catalyzes the release of premature peptidyl moieties from peptidyl-tRNA molecules trapped in stalled 50S ribosomal subunits, and thus maintains levels of free tRNAs and 50S ribosomes. In Fusobacterium nucleatum subsp. nucleatum (strain ATCC 25586 / DSM 15643 / BCRC 10681 / CIP 101130 / JCM 8532 / KCTC 2640 / LMG 13131 / VPI 4355), this protein is Peptidyl-tRNA hydrolase.